Reading from the N-terminus, the 480-residue chain is Probable histone deacetylase 1-A (480 aa).

Positions 10-321 (KVCYYYDGDV…WTYETAVALD (312 aa)) are histone deacetylase. The active site involves histidine 141. Positions 388-480 (SIHDDSGEED…KRVKEETKSV (93 aa)) are disordered. Over residues 401 to 416 (PDKRISIRSSDKRIAC) the composition is skewed to basic and acidic residues. The span at 417–427 (DEEFSDSEDEG) shows a compositional bias: acidic residues. The segment covering 443–480 (VKTEEEKEGEDKKDVKEEEKAKDEKTDSKRVKEETKSV) has biased composition (basic and acidic residues).

It belongs to the histone deacetylase family. HD type 1 subfamily. Part of a large multiprotein complex that also contains RBBP4. Oocyte.

The protein resides in the nucleus. It localises to the cytoplasm. It catalyses the reaction N(6)-acetyl-L-lysyl-[histone] + H2O = L-lysyl-[histone] + acetate. The catalysed reaction is N(6)-acetyl-L-lysyl-[protein] + H2O = L-lysyl-[protein] + acetate. It carries out the reaction N(6)-(2E)-butenoyl-L-lysyl-[protein] + H2O = (2E)-2-butenoate + L-lysyl-[protein]. Functionally, histone deacetylase that catalyzes the deacetylation of lysine residues on the N-terminal part of the core histones (H2A, H2B, H3 and H4). Histone deacetylation gives a tag for epigenetic repression and plays an important role in transcriptional regulation, cell cycle progression and developmental events. Histone deacetylases act via the formation of large multiprotein complexes. Also functions as deacetylase for non-histone proteins. In addition to protein deacetylase activity, also has protein-lysine deacylase activity: acts as a protein decrotonylase by mediating decrotonylation ((2E)-butenoyl) of histones. In Xenopus laevis (African clawed frog), this protein is Probable histone deacetylase 1-A (hdac1-a).